A 262-amino-acid chain; its full sequence is Mitochondrial calcium uniporter regulator 1 (262 aa).

A coiled-coil region spans residues 138 to 175 (EKSEFSALRTQNEKVKIELQQLKKQLNDSIVKVRASNK). A helical membrane pass occupies residues 239–261 (TIKYLAGSVFTCLTIALGFYRLW).

The protein belongs to the CCDC90 family.

Its subcellular location is the mitochondrion inner membrane. Its function is as follows. Key regulator of mitochondrial calcium uniporter (mcu) required for calcium entry into mitochondrion. This Xenopus tropicalis (Western clawed frog) protein is Mitochondrial calcium uniporter regulator 1.